The chain runs to 123 residues: UPF0102 protein SPO0400 (123 aa).

Belongs to the UPF0102 family.

This is UPF0102 protein SPO0400 from Ruegeria pomeroyi (strain ATCC 700808 / DSM 15171 / DSS-3) (Silicibacter pomeroyi).